The chain runs to 483 residues: Probable cobyric acid synthase (483 aa).

Positions 247–433 (ELHIQIIKLP…LHGIFHNFAF (187 aa)) constitute a GATase cobBQ-type domain. The active-site Nucleophile is the cysteine 325. Histidine 425 is a catalytic residue.

Belongs to the CobB/CobQ family. CobQ subfamily.

Its pathway is cofactor biosynthesis; adenosylcobalamin biosynthesis. In terms of biological role, catalyzes amidations at positions B, D, E, and G on adenosylcobyrinic A,C-diamide. NH(2) groups are provided by glutamine, and one molecule of ATP is hydrogenolyzed for each amidation. The polypeptide is Probable cobyric acid synthase (Thermococcus gammatolerans (strain DSM 15229 / JCM 11827 / EJ3)).